Reading from the N-terminus, the 450-residue chain is tRNA modification GTPase MnmE (450 aa).

3 residues coordinate (6S)-5-formyl-5,6,7,8-tetrahydrofolate: lysine 21, glutamate 78, and lysine 117. The 164-residue stretch at 213–376 (GHALSIVGKP…LSQKISAFFP (164 aa)) folds into the TrmE-type G domain. Asparagine 223 contributes to the K(+) binding site. GTP contacts are provided by residues 223–228 (NAGKSS), 242–248 (SDIKGTT), and 267–270 (DTAG). Serine 227 serves as a coordination point for Mg(2+). Serine 242, isoleucine 244, and threonine 247 together coordinate K(+). Residue threonine 248 participates in Mg(2+) binding. Position 450 (lysine 450) interacts with (6S)-5-formyl-5,6,7,8-tetrahydrofolate.

This sequence belongs to the TRAFAC class TrmE-Era-EngA-EngB-Septin-like GTPase superfamily. TrmE GTPase family. Homodimer. Heterotetramer of two MnmE and two MnmG subunits. It depends on K(+) as a cofactor.

The protein localises to the cytoplasm. Exhibits a very high intrinsic GTPase hydrolysis rate. Involved in the addition of a carboxymethylaminomethyl (cmnm) group at the wobble position (U34) of certain tRNAs, forming tRNA-cmnm(5)s(2)U34. This is tRNA modification GTPase MnmE from Helicobacter pylori (strain Shi470).